The sequence spans 508 residues: Glycerol kinase (508 aa).

Thr-14 lines the ADP pocket. ATP-binding residues include Thr-14, Thr-15, and Ser-16. Residue Thr-14 coordinates sn-glycerol 3-phosphate. Arg-18 is a binding site for ADP. Sn-glycerol 3-phosphate-binding residues include Arg-84, Glu-85, and Tyr-136. The glycerol site is built by Arg-84, Glu-85, and Tyr-136. Residue His-232 is modified to Phosphohistidine; by HPr. A sn-glycerol 3-phosphate-binding site is contributed by Asp-246. 2 residues coordinate glycerol: Asp-246 and Gln-247. 2 residues coordinate ADP: Thr-268 and Gly-311. Positions 268, 311, 315, and 412 each coordinate ATP. ADP is bound by residues Gly-412 and Asn-416.

The protein belongs to the FGGY kinase family. In terms of assembly, homotetramer and homodimer (in equilibrium). In terms of processing, the phosphoenolpyruvate-dependent sugar phosphotransferase system (PTS), including enzyme I, and histidine-containing protein (HPr) are required for the phosphorylation, which leads to the activation of the enzyme.

The enzyme catalyses glycerol + ATP = sn-glycerol 3-phosphate + ADP + H(+). The protein operates within polyol metabolism; glycerol degradation via glycerol kinase pathway; sn-glycerol 3-phosphate from glycerol: step 1/1. Activated by phosphorylation and inhibited by fructose 1,6-bisphosphate (FBP). Its function is as follows. Key enzyme in the regulation of glycerol uptake and metabolism. Catalyzes the phosphorylation of glycerol to yield sn-glycerol 3-phosphate. The chain is Glycerol kinase from Streptococcus pyogenes serotype M18 (strain MGAS8232).